A 467-amino-acid chain; its full sequence is Retinoic acid receptor RXR-alpha (467 aa).

The tract at residues 1 to 61 is disordered; it reads MDTKHFLPLD…LHSPISTLSS (61 aa). Residues 1–139 form a modulating region; it reads MDTKHFLPLD…GNMSSFTKHI (139 aa). A Glycyl lysine isopeptide (Lys-Gly) (interchain with G-Cter in SUMO2) cross-link involves residue lysine 4. Residues serine 22 and serine 28 each carry the phosphoserine modification. Positions 32-55 are enriched in low complexity; the sequence is PSLHPSLGPGLGSPLGSPGQLHSP. Phosphoserine; by MAPK8 and MAPK9 occurs at positions 61 and 75. A disordered region spans residues 79–109; sequence PHSMSVPTTPTLGFETGSPQLNSPMNPVSSS. Residues 83–109 are compositionally biased toward polar residues; sequence SVPTTPTLGFETGSPQLNSPMNPVSSS. At threonine 87 the chain carries Phosphothreonine; by MAPK8 and MAPK9. Residue lysine 113 forms a Glycyl lysine isopeptide (Lys-Gly) (interchain with G-Cter in SUMO) linkage. Serine 134 is modified (phosphoserine). Zn(2+) is bound by residues cysteine 140 and cysteine 143. The segment at 140-160 adopts an NR C4-type zinc-finger fold; sequence CAICGDRSSGKHYGVYSCEGC. A DNA-binding region (nuclear receptor) is located at residues 140–205; the sequence is CAICGDRSSG…RYQKCLAMGM (66 aa). Lysine 150 bears the N6-acetyllysine mark. 2 residues coordinate Zn(2+): cysteine 157 and cysteine 160. The tract at residues 165–170 is nuclear localization signal; sequence KRTVRK. Zn(2+) contacts are provided by cysteine 176, cysteine 182, cysteine 192, and cysteine 195. An NR C4-type zinc finger spans residues 176 to 200; that stretch reads CRDNKDCLIDKRQRNRCQYCRYQKC. Positions 206-229 are hinge; that stretch reads KREAVQEERQRGKDRNENEVESTS. The span at 211–223 shows a compositional bias: basic and acidic residues; the sequence is QEERQRGKDRNEN. The disordered stretch occupies residues 211–233; it reads QEERQRGKDRNENEVESTSSANE. The NR LBD domain maps to 232–463; the sequence is NEDMPVEKIL…TFLMEMLEAP (232 aa). Serine 264 is modified (phosphoserine). Serine 265 carries the phosphoserine; by MAPK8 and MAPK9 modification. 9-cis-retinoate contacts are provided by arginine 321 and alanine 332. The all-trans-retinoate site is built by arginine 321 and alanine 332. Positions 353–373 are required for nuclear export; it reads RVLTELVSKMRDMQMDKTELG.

Belongs to the nuclear hormone receptor family. NR2 subfamily. As to quaternary structure, homodimer. Heterodimer (via C-terminus) with RARA; required for ligand-dependent retinoic acid receptor transcriptional activity; association with RARA is enhanced by pulsatile shear stress. Heterodimer with PPARA (via the leucine-like zipper in the LBD); the interaction is required for PPARA transcriptional activity. Heterodimerizes with PPARG. Heterodimerizes (via NR LBD) with RARB. Heterodimerizes with NR1H4; the heterodimerization enhances the binding affinity for LXXLL motifs from coactivators. Interacts with NCOA3 and NCOA6 coactivators. Interacts with FAM120B. Interacts with coactivator PELP1, SENP6, SFPQ, DNTTIP2 and RNF8. Interacts with PRMT2. Interacts with ASXL1. Interacts with BHLHE40/DEC1, BHLHE41/DEC2, MED1, NCOR1 and NCOR2. Interacts in a ligand-dependent fashion with MED1 and NCOA1. Interacts with VDR. Interacts with EP300; the interaction is decreased by 9-cis retinoic acid. Heterodimer (via C-terminus) with NR4A1 (DNA-binding domain); the interaction is enhanced by 9-cis retinoic acid. NR4A1 competes with EP300 for interaction with RXRA and thereby attenuates EP300 mediated acetylation of RXRA. In the absence of hormonal ligand, interacts with TACC1. Interacts ith IGFBP3. Phosphorylated on serine and threonine residues mainly in the N-terminal modulating domain. Constitutively phosphorylated on Ser-22 in the presence or absence of ligand. Under stress conditions, hyperphosphorylated by activated JNK on Ser-61, Ser-75, Thr-87 and Ser-265. Phosphorylated on Ser-28, in vitro, by PKA. This phosphorylation is required for repression of cAMP-mediated transcriptional activity of RARA. Post-translationally, ubiquitinated by UBR5, leading to its degradation: UBR5 specifically recognizes and binds ligand-bound RXRA when it is not associated with coactivators (NCOAs). In presence of NCOAs, the UBR5-degron is not accessible, preventing its ubiquitination and degradation. In terms of processing, sumoylation negatively regulates transcriptional activity. Desumoylated specifically by SENP6. Acetylated by EP300; acetylation enhances DNA binding and transcriptional activity. As to expression, expressed in the adrenal gland with main expression in the zona fasciculata and medulla (at protein level). Expressed in aortic endothelial cells, with high expression in the descending thoracic aorta and the outer curvature of the aortic arch, where pulsatory shear stress exists, but very low in the inner curvature of the aortic arch, where oscillatory shear stress prevails (at protein level).

It is found in the nucleus. The protein resides in the cytoplasm. Its subcellular location is the mitochondrion. Its function is as follows. Receptor for retinoic acid that acts as a transcription factor. Forms homo- or heterodimers with retinoic acid receptors (RARs) and binds to target response elements in response to their ligands, all-trans or 9-cis retinoic acid, to regulate gene expression in various biological processes. The RAR/RXR heterodimers bind to the retinoic acid response elements (RARE) composed of tandem 5'-AGGTCA-3' sites known as DR1-DR5 to regulate transcription. The high affinity ligand for retinoid X receptors (RXRs) is 9-cis retinoic acid. In the absence of ligand, the RXR-RAR heterodimers associate with a multiprotein complex containing transcription corepressors that induce histone deacetylation, chromatin condensation and transcriptional suppression. On ligand binding, the corepressors dissociate from the receptors and coactivators are recruited leading to transcriptional activation. Serves as a common heterodimeric partner for a number of nuclear receptors, such as RARA, RARB and PPARA. The RXRA/RARB heterodimer can act as a transcriptional repressor or transcriptional activator, depending on the RARE DNA element context. The RXRA/PPARA heterodimer is required for PPARA transcriptional activity on fatty acid oxidation genes such as ACOX1 and the P450 system genes. Together with RARA, positively regulates microRNA-10a expression, thereby inhibiting the GATA6/VCAM1 signaling response to pulsatile shear stress in vascular endothelial cells. Acts as an enhancer of RARA binding to RARE DNA element. May facilitate the nuclear import of heterodimerization partners such as VDR and NR4A1. Promotes myelin debris phagocytosis and remyelination by macrophages. Plays a role in the attenuation of the innate immune system in response to viral infections, possibly by negatively regulating the transcription of antiviral genes such as type I IFN genes. Involved in the regulation of calcium signaling by repressing ITPR2 gene expression, thereby controlling cellular senescence. The chain is Retinoic acid receptor RXR-alpha (Rxra) from Rattus norvegicus (Rat).